The sequence spans 192 residues: Signal peptidase complex catalytic subunit SEC11C (192 aa).

The Cytoplasmic segment spans residues 2–28; it reads VRAGAVGTHLPASGLDIFGDLRKMNKR. A helical; Signal-anchor for type II membrane protein membrane pass occupies residues 29 to 48; sequence QLYYQVLNFAMIVSSALMIW. Topologically, residues 49–192 are lumenal; that stretch reads KGLIVLTGSE…GAYVLLKRES (144 aa). Active-site charge relay system residues include Ser68, His108, and Asp134. The tract at residues 177–188 is C-terminal short (CTS) helix; it reads ALLAVMGAYVLL.

This sequence belongs to the peptidase S26B family. Component of the signal peptidase complex paralog C (SPC-C) composed of a catalytic subunit SEC11C and three accessory subunits SPCS1, SPCS2 and SPCS3. Within the complex, interacts with SPCS2 and SPCS3. The complex induces a local thinning of the ER membrane which is used to measure the length of the signal peptide (SP) h-region of protein substrates. This ensures the selectivity of the complex towards h-regions shorter than 18-20 amino acids. Post-translationally, may undergo processing at the N-terminus.

It localises to the endoplasmic reticulum membrane. The enzyme catalyses Cleavage of hydrophobic, N-terminal signal or leader sequences from secreted and periplasmic proteins.. In terms of biological role, catalytic component of the signal peptidase complex (SPC) which catalyzes the cleavage of N-terminal signal sequences from nascent proteins as they are translocated into the lumen of the endoplasmic reticulum. Specifically cleaves N-terminal signal peptides that contain a hydrophobic alpha-helix (h-region) shorter than 18-20 amino acids. The protein is Signal peptidase complex catalytic subunit SEC11C (SEC11C) of Canis lupus familiaris (Dog).